Consider the following 351-residue polypeptide: Phosphate acyltransferase (351 aa).

Belongs to the PlsX family. Homodimer. Probably interacts with PlsY.

The protein resides in the cytoplasm. It catalyses the reaction a fatty acyl-[ACP] + phosphate = an acyl phosphate + holo-[ACP]. It participates in lipid metabolism; phospholipid metabolism. In terms of biological role, catalyzes the reversible formation of acyl-phosphate (acyl-PO(4)) from acyl-[acyl-carrier-protein] (acyl-ACP). This enzyme utilizes acyl-ACP as fatty acyl donor, but not acyl-CoA. The sequence is that of Phosphate acyltransferase from Maricaulis maris (strain MCS10) (Caulobacter maris).